The following is a 197-amino-acid chain: Imidazoleglycerol-phosphate dehydratase (197 aa).

The protein belongs to the imidazoleglycerol-phosphate dehydratase family.

The protein resides in the cytoplasm. The enzyme catalyses D-erythro-1-(imidazol-4-yl)glycerol 3-phosphate = 3-(imidazol-4-yl)-2-oxopropyl phosphate + H2O. It participates in amino-acid biosynthesis; L-histidine biosynthesis; L-histidine from 5-phospho-alpha-D-ribose 1-diphosphate: step 6/9. The chain is Imidazoleglycerol-phosphate dehydratase from Rhodopseudomonas palustris (strain TIE-1).